The primary structure comprises 479 residues: Cyclic AMP-responsive element-binding protein 3-like protein 3 (479 aa).

Residues 1 to 317 (MDGDIAAGKM…QSTSKPAHAG (317 aa)) are Cytoplasmic-facing. Positions 67 to 144 (CILGPGDSDP…CPEPPRTQVQ (78 aa)) are disordered. Polar residues predominate over residues 98-110 (PQDTPPRSGTEPA). The 64-residue stretch at 239-302 (VLKKIRRKIR…LSLLEQLKHL (64 aa)) folds into the bZIP domain. The segment at 241-270 (KKIRRKIRNKQSAQESRKKKKEYIDGLENR) is basic motif. Residues 281–302 (LQRKVLHLEKQNLSLLEQLKHL) form a leucine-zipper region. K290 is covalently cross-linked (Glycyl lysine isopeptide (Lys-Gly) (interchain with G-Cter in ubiquitin)). The chain crosses the membrane as a helical; Signal-anchor for type II membrane protein span at residues 318 to 338 (TCIAVLLLSFALIILPSISPF). Residues 339-479 (NSNKVDSPGD…RLVQDALGVL (141 aa)) are Lumenal-facing. N-linked (GlcNAc...) asparagine glycans are attached at residues N411, N418, and N425.

It belongs to the bZIP family. ATF subfamily. As to quaternary structure, binds DNA as a dimer. May form homodimers. Interacts with ATF6. Interacts with SYNV1/HRD1; this interaction leads to CREB3L3 ubiquitination and proteasomal degradation. Post-translationally, following ER stress a fragment containing the cytoplasmic transcription factor domain is released by proteolysis. The cleavage seems to be performed sequentially by site-1 and site-2 proteases. In terms of processing, N-glycosylation is required for optimal proteolytic activation. Ubiquitinated at Lys-290 by SYNV1/HRD1 via 'Lys-27'-linked ubiquitin. As to expression, expressed in adult liver (at protein level) and small intestine.

It localises to the endoplasmic reticulum membrane. It is found in the nucleus. In terms of biological role, transcription factor that may act during endoplasmic reticulum (ER) stress by activating unfolded protein response target genes. Activated in response to cAMP stimulation. Binds to the cAMP response element (CRE). Activates transcription through box-B element. Activates transcription through CRE. May function synergistically with ATF6. In acute inflammatory response, may activate expression of acute phase response (APR) genes. May be involved in growth suppression. Regulates FGF21 transcription. Plays a crucial role in the regulation of triglyceride metabolism and is required for the maintenance of normal plasma triglyceride concentrations. The protein is Cyclic AMP-responsive element-binding protein 3-like protein 3 (Creb3l3) of Mus musculus (Mouse).